Consider the following 305-residue polypeptide: Serine/threonine-protein phosphatase PP-X isozyme 2 (305 aa).

The Mn(2+) site is built by D51, H53, D79, and N111. Residue H112 is the Proton donor of the active site. The Mn(2+) site is built by H161 and H236.

This sequence belongs to the PPP phosphatase family. PP-4 (PP-X) subfamily. Requires Mn(2+) as cofactor. As to expression, ubiquitous, mostly expressed in root mersitems, flowers, and vascular tissues.

The protein localises to the plastid stroma. It catalyses the reaction O-phospho-L-seryl-[protein] + H2O = L-seryl-[protein] + phosphate. The enzyme catalyses O-phospho-L-threonyl-[protein] + H2O = L-threonyl-[protein] + phosphate. The protein is Serine/threonine-protein phosphatase PP-X isozyme 2 (PPX2) of Arabidopsis thaliana (Mouse-ear cress).